The sequence spans 1225 residues: Cytosolic carboxypeptidase 1 (1225 aa).

Residues D366–D392 show a composition bias toward acidic residues. Positions D366–D398 are disordered. The region spanning Y842–K1132 is the Peptidase M14 domain. H914, E917, and H1011 together coordinate Zn(2+). The Proton donor/acceptor role is filled by E1096. Positions Y1181 to L1193 are enriched in acidic residues. Positions Y1181 to T1225 are disordered.

Belongs to the peptidase M14 family. The cofactor is Zn(2+).

The protein localises to the cytoplasm. The protein resides in the cytosol. It localises to the nucleus. It is found in the mitochondrion. It carries out the reaction (L-glutamyl)(n+1)-gamma-L-glutamyl-L-glutamyl-[protein] + H2O = (L-glutamyl)(n)-gamma-L-glutamyl-L-glutamyl-[protein] + L-glutamate. The enzyme catalyses C-terminal L-alpha-aminoacyl-L-glutamyl-L-glutamyl-[tubulin] + H2O = C-terminal L-alpha-aminoacyl-L-glutamyl-[tubulin] + L-glutamate. Metallocarboxypeptidase that mediates protein deglutamylation of tubulin and non-tubulin target proteins. Catalyzes the removal of polyglutamate side chains present on the gamma-carboxyl group of glutamate residues within the C-terminal tail of alpha- and beta-tubulin. Specifically cleaves tubulin long-side-chains, while it is not able to remove the branching point glutamate. Also catalyzes the removal of polyglutamate residues from the carboxy-terminus of alpha-tubulin as well as non-tubulin proteins. This Xenopus laevis (African clawed frog) protein is Cytosolic carboxypeptidase 1 (agtpbp1).